The primary structure comprises 255 residues: BTB/POZ domain-containing protein kctd15 (255 aa).

The BTB domain occupies 30 to 100 (APVHIDVGGH…LRTSKLLLPE (71 aa)).

Forms oligomers, predominantly homopentamers. Interacts with TFAP2A; this interaction inhibits TFAP2A transcriptional activation.

Its subcellular location is the nucleus. Its function is as follows. During embryonic development, interferes with neural crest formation. Inhibits AP2 transcriptional activity by interaction with its activation domain. The sequence is that of BTB/POZ domain-containing protein kctd15 (kctd15) from Xenopus tropicalis (Western clawed frog).